The sequence spans 208 residues: Transmembrane emp24 domain-containing protein p24beta2 (208 aa).

Residues 1 to 21 (MSLKGTIVLLGLLWSFQATLG) form the signal peptide. Topologically, residues 22–176 (IRFVIDREEC…ENMSKRAVHK (155 aa)) are lumenal. Residues 29 to 116 (EECFSHKAEY…HETIDFDVQL (88 aa)) form the GOLD domain. Residues 134–149 (LMEQISKLEEALYNIQ) are a coiled coil. N-linked (GlcNAc...) asparagine glycosylation occurs at N168. Residues 177–195 (ALFESFALIGASFLQVYLL) form a helical membrane-spanning segment. Topologically, residues 196-208 (RRLFERKLGMSRV) are cytoplasmic. The COPII vesicle coat-binding motif lies at 198-199 (LF). Positions 198-208 (LFERKLGMSRV) match the COPI vesicle coat-binding motif. Positions 207–208 (RV) match the Required for the export from the endoplasmic reticulum to the Golgi motif.

Belongs to the EMP24/GP25L family. Probably oligomerizes with other members of the EMP24/GP25L family. Associates with the COPI vesicle coat (coatomer). Associates with the COPII vesicle coat (coatomer). Interacts with p24delta5.

The protein localises to the golgi apparatus. It is found in the cis-Golgi network membrane. It localises to the golgi stack membrane. Functionally, involved in vesicular protein trafficking. Mainly functions in the early secretory pathway but also in post-Golgi membranes. Thought to act as cargo receptor at the lumenal side for incorporation of secretory cargo molecules into transport vesicles and to be involved in vesicle coat formation at the cytoplasmic side. Interacts with p24delta5 at endoplasmic reticulum export sites for endoplasmic reticulum exit and coupled transport to the Golgi apparatus. The sequence is that of Transmembrane emp24 domain-containing protein p24beta2 from Arabidopsis thaliana (Mouse-ear cress).